Consider the following 1146-residue polypeptide: Activator of SKN7 protein 10 (1146 aa).

Polar residues predominate over residues 1 to 15 (MSDYFSSRPSQTLTP). Disordered stretches follow at residues 1–32 (MSDYFSSRPSQTLTPMGNKPSGGGGGDDASSI) and 171–194 (ITDPFTTAPRGPKKAQPAQKKVGL). Ser-344 is subject to Phosphoserine. The 125-residue stretch at 482–606 (CIKAGYFLKK…DCTLKDASST (125 aa)) folds into the PH domain. A disordered region spans residues 553–575 (NNHHRQASDVHNSSTTTGGTAGA). Residues 564-575 (NSSTTTGGTAGA) show a composition bias toward low complexity. Residue Ser-793 is modified to Phosphoserine. At Thr-808 the chain carries Phosphothreonine. Disordered regions lie at residues 835-854 (MATSGNTTPSYSSGSRPQSM) and 909-982 (PVNS…TAMR). Residues 912–924 (SPGSSNSESSSGG) are compositionally biased toward low complexity. Positions 939–950 (YTQRNSEGSSPC) are enriched in polar residues. A Phosphoserine modification is found at Ser-944. Over residues 958 to 968 (QQQQPLQMQPL) the composition is skewed to low complexity. Ser-969 is subject to Phosphoserine. The span at 969-982 (SRTSSSSVNVTAMR) shows a compositional bias: polar residues. The residue at position 1017 (Thr-1017) is a Phosphothreonine. A phosphoserine mark is found at Ser-1070, Ser-1095, and Ser-1098. Residues 1124 to 1146 (GIQEDDGDSTNNDTIKLNQSIYS) form a disordered region. Positions 1132–1146 (STNNDTIKLNQSIYS) are enriched in polar residues.

It belongs to the RGC1 family. Component of the RNA polymerase II holoenzyme. Interacts with RPO21 and SSN8. Phosphorylated in response to various stresses. stress-induced phosphorylation is partially dependent on HOG1.

It localises to the cytoplasm. Positive regulator of FPS1 glycerol channel required for the glycerol efflux. As a component of the RNA polymerase II holoenzyme, is required for SSN8 destruction in response to oxidative stress but not heat shock. Required for cell survival in response to heat shock independent of SSN8. This is Activator of SKN7 protein 10 (ASK10) from Saccharomyces cerevisiae (strain ATCC 204508 / S288c) (Baker's yeast).